The chain runs to 263 residues: Palmitoyltransferase ZDHHC22 (263 aa).

Residues 1-9 (MLALRLLNV) lie on the Cytoplasmic side of the membrane. A helical transmembrane segment spans residues 10–30 (VAPAYFLCISLVTFVLQLFLF). Residues 31–48 (LPSMREDPAAARLFSPAL) are Lumenal-facing. Residues 49 to 69 (LHGALFLFLSANALGNYVLVI) traverse the membrane as a helical segment. Topologically, residues 70-125 (QNSPDDLGACQGASARKTPCPSPSTHFCRVCARVTLRHDHHCFFTGNCIGSRNMRN) are cytoplasmic. One can recognise a DHHC domain in the interval 92–131 (PSTHFCRVCARVTLRHDHHCFFTGNCIGSRNMRNFVLFCL). Cys-111 serves as the catalytic S-palmitoyl cysteine intermediate. Helical transmembrane passes span 126–146 (FVLF…AGVA) and 147–167 (YISA…TLLP). At 168-182 (TSISQFFSGAVLGSE) the chain is on the cytoplasmic side. Residues 183-203 (MFVILMLYLWFAIGLACAGFC) traverse the membrane as a helical segment. Over 204 to 263 (CHQLLLILRGQTRHQVRKGVAVRARPWRKNLQEVFGKRWLLGLLVPMFNVGSESSKQQDK) the chain is Lumenal.

The protein belongs to the DHHC palmitoyltransferase family. Interacts with CNN3. As to expression, widely expressed.

It is found in the endoplasmic reticulum membrane. The protein resides in the golgi apparatus membrane. The catalysed reaction is L-cysteinyl-[protein] + hexadecanoyl-CoA = S-hexadecanoyl-L-cysteinyl-[protein] + CoA. In terms of biological role, palmitoyltransferase that could catalyze the addition of palmitate onto various protein substrates and be involved in a variety of cellular processes. Catalyzes the palmitoylation of KCNMA1, regulating localization of KCNMA1 to the plasma membrane. Might also mediate palmitoylation of CNN3. The protein is Palmitoyltransferase ZDHHC22 of Homo sapiens (Human).